We begin with the raw amino-acid sequence, 141 residues long: ATP synthase epsilon chain (141 aa).

It belongs to the ATPase epsilon chain family. In terms of assembly, F-type ATPases have 2 components, CF(1) - the catalytic core - and CF(0) - the membrane proton channel. CF(1) has five subunits: alpha(3), beta(3), gamma(1), delta(1), epsilon(1). CF(0) has three main subunits: a, b and c.

Its subcellular location is the cell membrane. In terms of biological role, produces ATP from ADP in the presence of a proton gradient across the membrane. This chain is ATP synthase epsilon chain, found in Natranaerobius thermophilus (strain ATCC BAA-1301 / DSM 18059 / JW/NM-WN-LF).